The primary structure comprises 78 residues: Acyl carrier protein (78 aa).

One can recognise a Carrier domain in the interval 2 to 77 (STIEERVKKI…AAIDYVTSHQ (76 aa)). Residue Ser37 is modified to O-(pantetheine 4'-phosphoryl)serine.

It belongs to the acyl carrier protein (ACP) family. In terms of processing, 4'-phosphopantetheine is transferred from CoA to a specific serine of apo-ACP by AcpS. This modification is essential for activity because fatty acids are bound in thioester linkage to the sulfhydryl of the prosthetic group.

It localises to the cytoplasm. The protein operates within lipid metabolism; fatty acid biosynthesis. In terms of biological role, carrier of the growing fatty acid chain in fatty acid biosynthesis. The protein is Acyl carrier protein of Pseudomonas fluorescens (strain SBW25).